The following is a 196-amino-acid chain: dTTP/UTP pyrophosphatase (196 aa).

The active-site Proton acceptor is the D72.

Belongs to the Maf family. YhdE subfamily. It depends on a divalent metal cation as a cofactor.

It localises to the cytoplasm. The enzyme catalyses dTTP + H2O = dTMP + diphosphate + H(+). It carries out the reaction UTP + H2O = UMP + diphosphate + H(+). Functionally, nucleoside triphosphate pyrophosphatase that hydrolyzes dTTP and UTP. May have a dual role in cell division arrest and in preventing the incorporation of modified nucleotides into cellular nucleic acids. The protein is dTTP/UTP pyrophosphatase of Chlamydia felis (strain Fe/C-56) (Chlamydophila felis).